Here is a 383-residue protein sequence, read N- to C-terminus: Succinate--CoA ligase [ADP-forming] subunit beta (383 aa).

Residues 9 to 236 form the ATP-grasp domain; it reads KELLGRFGLR…VEAADPQEHR (228 aa). Residues lysine 45, 52–54, glutamate 91, alanine 94, and glutamate 99 contribute to the ATP site; that span reads GRG. Residues asparagine 191 and aspartate 205 each coordinate Mg(2+). Substrate is bound by residues asparagine 256 and 313–315; that span reads GIT.

This sequence belongs to the succinate/malate CoA ligase beta subunit family. Heterotetramer of two alpha and two beta subunits. Mg(2+) serves as cofactor.

It catalyses the reaction succinate + ATP + CoA = succinyl-CoA + ADP + phosphate. The enzyme catalyses GTP + succinate + CoA = succinyl-CoA + GDP + phosphate. The protein operates within carbohydrate metabolism; tricarboxylic acid cycle; succinate from succinyl-CoA (ligase route): step 1/1. Succinyl-CoA synthetase functions in the citric acid cycle (TCA), coupling the hydrolysis of succinyl-CoA to the synthesis of either ATP or GTP and thus represents the only step of substrate-level phosphorylation in the TCA. The beta subunit provides nucleotide specificity of the enzyme and binds the substrate succinate, while the binding sites for coenzyme A and phosphate are found in the alpha subunit. This Rubrobacter xylanophilus (strain DSM 9941 / JCM 11954 / NBRC 16129 / PRD-1) protein is Succinate--CoA ligase [ADP-forming] subunit beta.